Consider the following 484-residue polypeptide: tRNA sulfurtransferase (484 aa).

One can recognise a THUMP domain in the interval 63–167; it reads REMIERLTCT…LDRLFVIHRQ (105 aa). ATP-binding positions include 185 to 186, Lys-267, Gly-289, and Gln-298; that span reads LM. A disulfide bridge connects residues Cys-346 and Cys-457. Positions 405-483 constitute a Rhodanese domain; that stretch reads VLPGQIVIDI…GHTNVRVYRP (79 aa). Cys-457 serves as the catalytic Cysteine persulfide intermediate.

The protein belongs to the ThiI family.

The protein resides in the cytoplasm. The enzyme catalyses [ThiI sulfur-carrier protein]-S-sulfanyl-L-cysteine + a uridine in tRNA + 2 reduced [2Fe-2S]-[ferredoxin] + ATP + H(+) = [ThiI sulfur-carrier protein]-L-cysteine + a 4-thiouridine in tRNA + 2 oxidized [2Fe-2S]-[ferredoxin] + AMP + diphosphate. It catalyses the reaction [ThiS sulfur-carrier protein]-C-terminal Gly-Gly-AMP + S-sulfanyl-L-cysteinyl-[cysteine desulfurase] + AH2 = [ThiS sulfur-carrier protein]-C-terminal-Gly-aminoethanethioate + L-cysteinyl-[cysteine desulfurase] + A + AMP + 2 H(+). It participates in cofactor biosynthesis; thiamine diphosphate biosynthesis. Its function is as follows. Catalyzes the ATP-dependent transfer of a sulfur to tRNA to produce 4-thiouridine in position 8 of tRNAs, which functions as a near-UV photosensor. Also catalyzes the transfer of sulfur to the sulfur carrier protein ThiS, forming ThiS-thiocarboxylate. This is a step in the synthesis of thiazole, in the thiamine biosynthesis pathway. The sulfur is donated as persulfide by IscS. The sequence is that of tRNA sulfurtransferase from Pseudomonas aeruginosa (strain LESB58).